We begin with the raw amino-acid sequence, 406 residues long: MTKKLFYYQASNPLNQKQKGSIIADTKQQAHFQLISRGLTHIKLQQNWQFGAKPKNSEISELLNQLATLLQSAIPLKNSLQILQQNCTQIVLNEWLERLLQSIESGLAFSQAIEQQGKYLTQQEIQLIQVGEMTGKLAVVCKKIATHRSQSLALQRKLQKIMLYPSMVLGISLLLTLALLLFIVPQFAEMYSGNNAELPTITAILLSISNFLKQNIGILLFFVLSFFLFYYFYLKRQTWFYQKKNQLISITPIFGTIQKLSRLVNFSQSLQIMLQAGVPLNQALDSFLPRTQTWQTKKTLVNDIVLDKEVRSILQWVSQGYAFSNSVSSDLFPMEAQQMLQIGEQSGKLALMLEHIAENYQEKLNHQIDLLSQMLEPLMMVIIGSLIGIIMMGMYLPIFNMGSVIQ.

The next 3 helical transmembrane spans lie at 167–187 (MVLG…VPQF), 214–234 (QNIG…YFYL), and 379–399 (MMVI…LPIF).

The protein belongs to the GSP F family.

The protein localises to the cell inner membrane. The sequence is that of Protein transport protein HofC homolog (hofC) from Haemophilus influenzae (strain ATCC 51907 / DSM 11121 / KW20 / Rd).